Reading from the N-terminus, the 369-residue chain is 3-dehydroquinate synthase (369 aa).

NAD(+) is bound by residues 75 to 80, 109 to 113, 133 to 134, Lys-146, Lys-155, and 173 to 176; these read DGEEHK, GVIGD, TT, and TLKT. Zn(2+)-binding residues include Glu-188, His-251, and His-268.

It belongs to the sugar phosphate cyclases superfamily. Dehydroquinate synthase family. Requires Co(2+) as cofactor. Zn(2+) is required as a cofactor. It depends on NAD(+) as a cofactor.

Its subcellular location is the cytoplasm. The catalysed reaction is 7-phospho-2-dehydro-3-deoxy-D-arabino-heptonate = 3-dehydroquinate + phosphate. It functions in the pathway metabolic intermediate biosynthesis; chorismate biosynthesis; chorismate from D-erythrose 4-phosphate and phosphoenolpyruvate: step 2/7. Catalyzes the conversion of 3-deoxy-D-arabino-heptulosonate 7-phosphate (DAHP) to dehydroquinate (DHQ). The sequence is that of 3-dehydroquinate synthase from Legionella pneumophila (strain Lens).